Reading from the N-terminus, the 749-residue chain is Photosystem I P700 chlorophyll a apoprotein A2 (749 aa).

Helical transmembrane passes span 46-69 (LFST…FHIA), 135-158 (LYQG…LHLQ), 175-199 (MNHH…HVAI), 273-291 (ISHH…GHMY), 343-366 (LHFQ…HHMG), 382-408 (AALY…IFFV), 430-452 (ALIS…LYLH), and 532-550 (FLVH…LILI). The [4Fe-4S] cluster site is built by C574 and C583. 2 helical membrane passes run 590–611 (STYM…YWHW) and 658–680 (LSPW…MFLI). Divinyl chlorophyll a-binding residues include H669, M677, and Y685. W686 is a phylloquinone binding site. Residues 722–742 (LVGVTHFAVGNIFTFGAFVIA) form a helical membrane-spanning segment.

Belongs to the PsaA/PsaB family. In terms of assembly, the PsaA/B heterodimer binds the P700 chlorophyll special pair and subsequent electron acceptors. PSI consists of a core antenna complex that captures photons, and an electron transfer chain that converts photonic excitation into a charge separation. The cyanobacterial PSI reaction center is composed of one copy each of PsaA,B,C,D,E,F,I,J,K,L,M and X, and forms trimeric complexes. PSI electron transfer chain: 5 divinyl chlorophyll a, 1 divinyl chlorophyll a', 2 phylloquinones and 3 4Fe-4S clusters. PSI core antenna: 90 divinyl chlorophyll a, 22 carotenoids, 3 phospholipids and 1 galactolipid. P700 is a divinyl chlorophyll a/divinyl chlorophyll a' dimer, A0 is one or more divinyl chlorophyll a, A1 is one or both phylloquinones and FX is a shared 4Fe-4S iron-sulfur center. serves as cofactor.

The protein resides in the cellular thylakoid membrane. It catalyses the reaction reduced [plastocyanin] + hnu + oxidized [2Fe-2S]-[ferredoxin] = oxidized [plastocyanin] + reduced [2Fe-2S]-[ferredoxin]. In terms of biological role, psaA and PsaB bind P700, the primary electron donor of photosystem I (PSI), as well as the electron acceptors A0, A1 and FX. PSI is a plastocyanin/cytochrome c6-ferredoxin oxidoreductase, converting photonic excitation into a charge separation, which transfers an electron from the donor P700 chlorophyll pair to the spectroscopically characterized acceptors A0, A1, FX, FA and FB in turn. Oxidized P700 is reduced on the lumenal side of the thylakoid membrane by plastocyanin or cytochrome c6. This chain is Photosystem I P700 chlorophyll a apoprotein A2, found in Prochlorococcus marinus (strain MIT 9313).